Here is a 346-residue protein sequence, read N- to C-terminus: GTPase Obg (346 aa).

Residues 1–159 enclose the Obg domain; the sequence is MRFVDRCRLK…RELRLELKVL (159 aa). The segment at 122–147 is disordered; that stretch reads KGGRGNLHFKSPHDRAPRRAEPGEPG. The segment covering 132–147 has biased composition (basic and acidic residues); that stretch reads SPHDRAPRRAEPGEPG. Residues 160–336 form the OBG-type G domain; it reads ADVGLLGFPN…LVRELAALAR (177 aa). Residues 166–173, 191–195, 218–221, 288–291, and 317–319 contribute to the GTP site; these read GFPNAGKS, FTTLT, DIPG, TKAD, and SAA. Mg(2+)-binding residues include serine 173 and threonine 193.

Belongs to the TRAFAC class OBG-HflX-like GTPase superfamily. OBG GTPase family. In terms of assembly, monomer. The cofactor is Mg(2+).

The protein resides in the cytoplasm. An essential GTPase which binds GTP, GDP and possibly (p)ppGpp with moderate affinity, with high nucleotide exchange rates and a fairly low GTP hydrolysis rate. Plays a role in control of the cell cycle, stress response, ribosome biogenesis and in those bacteria that undergo differentiation, in morphogenesis control. The polypeptide is GTPase Obg (Sorangium cellulosum (strain So ce56) (Polyangium cellulosum (strain So ce56))).